The sequence spans 297 residues: MKQRTLKQPITVVGIGLHSGQDVTLTLQPSEVNTGIRFLRTDIEDAPLIAADAFLVTDTVMSSNLMVNGIKIGTVEHLLSALAGFGIDNLLIKVSDAEIPIMDGSAANYVTLLLEAGIEEQAAPKQFMKILKPVKVVEGDKWAQLEPYDGFSLDFEIDFNHPGIPKDTQRYRFEFSLHNYIENVGNARTFGFMRDIEHLQKNNLALGGSLDNAIVLDDNGIMNKEGLRHQEEFVRHKILDAIGDLYLAKYSLIGGFSAYKSGHALNNKLIREVYNDPNNFEIVTIYDTSSVARAYEI.

Zn(2+) is bound by residues His-77, His-236, and Asp-240. The active-site Proton donor is the His-263.

It belongs to the LpxC family. Zn(2+) serves as cofactor.

It carries out the reaction a UDP-3-O-[(3R)-3-hydroxyacyl]-N-acetyl-alpha-D-glucosamine + H2O = a UDP-3-O-[(3R)-3-hydroxyacyl]-alpha-D-glucosamine + acetate. Its pathway is glycolipid biosynthesis; lipid IV(A) biosynthesis; lipid IV(A) from (3R)-3-hydroxytetradecanoyl-[acyl-carrier-protein] and UDP-N-acetyl-alpha-D-glucosamine: step 2/6. Catalyzes the hydrolysis of UDP-3-O-myristoyl-N-acetylglucosamine to form UDP-3-O-myristoylglucosamine and acetate, the committed step in lipid A biosynthesis. The chain is UDP-3-O-acyl-N-acetylglucosamine deacetylase from Psychrobacter sp. (strain PRwf-1).